Reading from the N-terminus, the 210-residue chain is Uridine kinase (210 aa).

12 to 19 (GGSGSGKT) provides a ligand contact to ATP.

The protein belongs to the uridine kinase family.

Its subcellular location is the cytoplasm. It carries out the reaction uridine + ATP = UMP + ADP + H(+). It catalyses the reaction cytidine + ATP = CMP + ADP + H(+). The protein operates within pyrimidine metabolism; CTP biosynthesis via salvage pathway; CTP from cytidine: step 1/3. Its pathway is pyrimidine metabolism; UMP biosynthesis via salvage pathway; UMP from uridine: step 1/1. This Bacillus pumilus (strain SAFR-032) protein is Uridine kinase.